A 155-amino-acid polypeptide reads, in one-letter code: Transcriptional repressor NrdR (155 aa).

A zinc finger spans residues 3 to 34 (CPFCSHFESKVVDSRPTDEGQAIRRRRECVSC). An ATP-cone domain is found at 49 to 139 (LIVVKKSGNR…VYREFKDINT (91 aa)).

This sequence belongs to the NrdR family. It depends on Zn(2+) as a cofactor.

In terms of biological role, negatively regulates transcription of bacterial ribonucleotide reductase nrd genes and operons by binding to NrdR-boxes. This Alkaliphilus metalliredigens (strain QYMF) protein is Transcriptional repressor NrdR.